Here is a 142-residue protein sequence, read N- to C-terminus: uncharacterized protein (142 aa).

Homodimer.

This is an uncharacterized protein from Bacillus subtilis (strain 168).